The following is a 467-amino-acid chain: tRNA modification GTPase MnmE (467 aa).

Positions 25, 87, and 130 each coordinate (6S)-5-formyl-5,6,7,8-tetrahydrofolate. Positions 226-389 constitute a TrmE-type G domain; it reads GLSVVLAGQP…LRGELLRIAG (164 aa). Position 236 (Asn-236) interacts with K(+). GTP contacts are provided by residues 236-241, 255-261, and 280-283; these read NVGKSS, TPIAGTT, and DTAG. Ser-240 contributes to the Mg(2+) binding site. The K(+) site is built by Thr-255, Ile-257, and Thr-260. Residue Thr-261 coordinates Mg(2+). Position 467 (Lys-467) interacts with (6S)-5-formyl-5,6,7,8-tetrahydrofolate.

The protein belongs to the TRAFAC class TrmE-Era-EngA-EngB-Septin-like GTPase superfamily. TrmE GTPase family. In terms of assembly, homodimer. Heterotetramer of two MnmE and two MnmG subunits. Requires K(+) as cofactor.

The protein localises to the cytoplasm. Its function is as follows. Exhibits a very high intrinsic GTPase hydrolysis rate. Involved in the addition of a carboxymethylaminomethyl (cmnm) group at the wobble position (U34) of certain tRNAs, forming tRNA-cmnm(5)s(2)U34. The polypeptide is tRNA modification GTPase MnmE (Burkholderia thailandensis (strain ATCC 700388 / DSM 13276 / CCUG 48851 / CIP 106301 / E264)).